The sequence spans 252 residues: uncharacterized protein (252 aa).

Position 28–35 (28–35 (GCDGTGKS)) interacts with ATP.

The protein to E.coli YghS and YghT.

This is an uncharacterized protein from Escherichia coli O6:H1 (strain CFT073 / ATCC 700928 / UPEC).